A 404-amino-acid chain; its full sequence is MTQTVKKVVVAYSGGLDTSVILPWLQENYDNCEIVALFVADVGQGAEELEGIEAKALASGASECYVVDLKDELVENYIYPTLKTGAVYEGTYLLGTSMARQSIAKAQVEIARKVGADALCHGCTGKGNDQIRFESCFAALAPELTVIAPWRIWDLTSRESLLEYLAERDIPTAASGTKIYSRDANAWHISHEGGELEDPWNQPSKQVWTMTVDPIDAPNEPEFLTISVVKGEITAVNGEEMYLIIRYTYLNEKAAAHGVGRVDIVENRLVGMKSRGCYETPGGTVMVEALRGIEELVLDKITRKWKHTVAAEFSHLVYDGRWFTPLCASLLAAAGTLAEEMNGEVIVKMYKGSVQAVQKQSPNSLYSEEFATFGDDNVYDDQSHAEGFIRLYSLSSRIKALASK.

Residues 11–19 (AYSGGLDTS) and A40 each bind ATP. L-citrulline is bound by residues Y92 and S97. Residue G122 coordinates ATP. L-aspartate contacts are provided by T124, N128, and D129. Residue N128 coordinates L-citrulline. L-citrulline-binding residues include R132, S181, S190, E266, and Y278.

This sequence belongs to the argininosuccinate synthase family. Type 1 subfamily. As to quaternary structure, homotetramer.

Its subcellular location is the cytoplasm. It carries out the reaction L-citrulline + L-aspartate + ATP = 2-(N(omega)-L-arginino)succinate + AMP + diphosphate + H(+). Its pathway is amino-acid biosynthesis; L-arginine biosynthesis; L-arginine from L-ornithine and carbamoyl phosphate: step 2/3. The sequence is that of Argininosuccinate synthase from Moritella abyssi.